Consider the following 141-residue polypeptide: Ribosome-binding factor A (141 aa).

A disordered region spans residues 120-141 (DEALRAQSAGARPAGDEDPYKP).

Belongs to the RbfA family. In terms of assembly, monomer. Binds 30S ribosomal subunits, but not 50S ribosomal subunits or 70S ribosomes.

Its subcellular location is the cytoplasm. In terms of biological role, one of several proteins that assist in the late maturation steps of the functional core of the 30S ribosomal subunit. Associates with free 30S ribosomal subunits (but not with 30S subunits that are part of 70S ribosomes or polysomes). Required for efficient processing of 16S rRNA. May interact with the 5'-terminal helix region of 16S rRNA. This is Ribosome-binding factor A from Corynebacterium jeikeium (strain K411).